Reading from the N-terminus, the 313-residue chain is Holliday junction branch migration complex subunit RuvB (313 aa).

Residues 1–157 are large ATPase domain (RuvB-L); the sequence is MNEYIGQGNI…FGLIMELDFY (157 aa). ATP is bound by residues glycine 38, lysine 41, threonine 42, threonine 43, 104–106, arginine 147, tyrosine 157, and arginine 194; that span reads EDF. Threonine 42 serves as a coordination point for Mg(2+). Positions 158–228 are small ATPAse domain (RuvB-S); sequence SIDELSKIIE…MVEEIMFLLG (71 aa). The head domain (RuvB-H) stretch occupies residues 231 to 313; sequence KEGLDELDRK…KVQRGLFDEE (83 aa). DNA contacts are provided by arginine 286 and arginine 291.

It belongs to the RuvB family. As to quaternary structure, homohexamer. Forms an RuvA(8)-RuvB(12)-Holliday junction (HJ) complex. HJ DNA is sandwiched between 2 RuvA tetramers; dsDNA enters through RuvA and exits via RuvB. An RuvB hexamer assembles on each DNA strand where it exits the tetramer. Each RuvB hexamer is contacted by two RuvA subunits (via domain III) on 2 adjacent RuvB subunits; this complex drives branch migration. In the full resolvosome a probable DNA-RuvA(4)-RuvB(12)-RuvC(2) complex forms which resolves the HJ.

Its subcellular location is the cytoplasm. It carries out the reaction ATP + H2O = ADP + phosphate + H(+). The RuvA-RuvB-RuvC complex processes Holliday junction (HJ) DNA during genetic recombination and DNA repair, while the RuvA-RuvB complex plays an important role in the rescue of blocked DNA replication forks via replication fork reversal (RFR). RuvA specifically binds to HJ cruciform DNA, conferring on it an open structure. The RuvB hexamer acts as an ATP-dependent pump, pulling dsDNA into and through the RuvAB complex. RuvB forms 2 homohexamers on either side of HJ DNA bound by 1 or 2 RuvA tetramers; 4 subunits per hexamer contact DNA at a time. Coordinated motions by a converter formed by DNA-disengaged RuvB subunits stimulates ATP hydrolysis and nucleotide exchange. Immobilization of the converter enables RuvB to convert the ATP-contained energy into a lever motion, pulling 2 nucleotides of DNA out of the RuvA tetramer per ATP hydrolyzed, thus driving DNA branch migration. The RuvB motors rotate together with the DNA substrate, which together with the progressing nucleotide cycle form the mechanistic basis for DNA recombination by continuous HJ branch migration. Branch migration allows RuvC to scan DNA until it finds its consensus sequence, where it cleaves and resolves cruciform DNA. In Thermosipho melanesiensis (strain DSM 12029 / CIP 104789 / BI429), this protein is Holliday junction branch migration complex subunit RuvB.